The following is a 104-amino-acid chain: Transcription factor ILI1 (104 aa).

The span at 1 to 11 (MSSSRRSRSRR) shows a compositional bias: basic residues. The interval 1-27 (MSSSRRSRSRRAGSSVPSSSSSSRTSI) is disordered. The span at 12 to 27 (AGSSVPSSSSSSRTSI) shows a compositional bias: low complexity. A bHLH domain is found at 16–71 (VPSSSSSSRTSISEDQIAELLSKLQALLPESQARNGAHRGSAARVLQETCSYIRSL).

This sequence belongs to the bHLH protein family. In terms of assembly, interacts with IBH1.

In terms of biological role, atypical and probable non DNA-binding bHLH transcription factor that acts as a positive regulator of cell elongation and plant development. Binds the transcription repressor IBH1 and forms a heterodimer of antagonistic bHLH transcription factors that function downstream of BZR1 to mediate brassinosteroid regulation of cell elongation and lamina inclination. This Oryza sativa subsp. indica (Rice) protein is Transcription factor ILI1 (ILI1).